Reading from the N-terminus, the 122-residue chain is Small ribosomal subunit protein uS13 (122 aa).

A disordered region spans residues 95 to 122 (SLPCRGQRTSTNARTRKGPKRAAVKKKK). Residues 108-122 (RTRKGPKRAAVKKKK) show a composition bias toward basic residues.

Belongs to the universal ribosomal protein uS13 family. In terms of assembly, part of the 30S ribosomal subunit. Forms a loose heterodimer with protein S19. Forms two bridges to the 50S subunit in the 70S ribosome.

Its function is as follows. Located at the top of the head of the 30S subunit, it contacts several helices of the 16S rRNA. In the 70S ribosome it contacts the 23S rRNA (bridge B1a) and protein L5 of the 50S subunit (bridge B1b), connecting the 2 subunits; these bridges are implicated in subunit movement. Contacts the tRNAs in the A and P-sites. The protein is Small ribosomal subunit protein uS13 of Desulforapulum autotrophicum (strain ATCC 43914 / DSM 3382 / VKM B-1955 / HRM2) (Desulfobacterium autotrophicum).